Here is a 374-residue protein sequence, read N- to C-terminus: Protein STRICTOSIDINE SYNTHASE-LIKE 10 (374 aa).

The signal sequence occupies residues 1-18; it reads MTMMIITVFLTVIAAVLA. N-linked (GlcNAc...) asparagine glycosylation is present at asparagine 50.

It belongs to the strictosidine synthase family.

Its subcellular location is the vacuole. This is Protein STRICTOSIDINE SYNTHASE-LIKE 10 from Arabidopsis thaliana (Mouse-ear cress).